A 517-amino-acid polypeptide reads, in one-letter code: MFS efflux transporter inpD (517 aa).

Positions 1 to 24 are disordered; sequence MEKTQTPSLTPDELSARSSTPFEE. Helical transmembrane passes span 37–57, 59–79, 89–109, 112–132, and 151–171; these read LKFS…ALSL, DIGW…LVFG, IVYL…ATAP, IALI…LSGA, and ILGA…GGII. An N-linked (GlcNAc...) asparagine glycan is attached at asparagine 172. 9 helical membrane-spanning segments follow: residues 178–198, 219–239, 247–267, 292–312, 328–348, 352–372, 381–401, 412–432, and 485–505; these read WIFY…VFLL, LPAF…LLWG, NARI…FMLV, FFSF…PIWL, LPII…TPVI, VPFM…LSTL, VLGF…QTLV, IPIG…IALS, and AIVK…IGVL.

Belongs to the major facilitator superfamily.

The protein resides in the cell membrane. In terms of biological role, MFS efflux transporter; part of the inp gene cluster that mediates the biosynthesis of fellutamide B, a mycotoxin that acts as a proteasome inhibitor. In the first step of fellutabmide B biosynthesis inpC activates 3-hydroxydodecanoic acid to generate 3-hydroxydodecanoyl-AMP that is then loaded onto the T0 domain of inpB. The 3-hydroxydodecanoyl-S-phosphopantetheinyl-T0 is sequentially extended with L-Asn and L-Gln by the two CAT modules of inpB. The linear lipodipeptide from inpB is then transferred onto inpA for the addition of the third amino acid, L-Leu. Reductive releasing of the lipotripeptide by the TE domain of inpA produces (2S)-fellutamide B. InpF might be involved in the release and transfer of the lipodipeptide from inpB to inpA. The inp cluster-encoded proteasome subunit inpE confers resistance to internally produced fellutamides. The MFS efflux transporter inpD may contribute to fellutamide resistance as well. This chain is MFS efflux transporter inpD, found in Emericella nidulans (strain FGSC A4 / ATCC 38163 / CBS 112.46 / NRRL 194 / M139) (Aspergillus nidulans).